Here is a 652-residue protein sequence, read N- to C-terminus: Large subunit GTPase 1 homolog (652 aa).

The residue at position 93 (Ser93) is a Phosphoserine. The region spanning 164–438 (WRQLWRVIER…LCDCPGLVMP (275 aa)) is the CP-type G domain. Position 212–215 (212–215 (NKAD)) interacts with GTP. Ser252 bears the Phosphoserine mark. The segment at 288–347 (LGEAASSEEDESEYEDCQEEEEDWQTCLEDSSSSDEEACGQDCKEGHTVDSEAQGRNTPQ) is disordered. A compositionally biased stretch (acidic residues) spans 293–311 (SSEEDESEYEDCQEEEEDW). Residues 387-394 (GYPNVGKS) and 431-434 (DCPG) contribute to the GTP site. The segment at 625–652 (RGAGKPWKKHGNRNKKEKSRRLYKHLDM) is disordered. Residues 630–652 (PWKKHGNRNKKEKSRRLYKHLDM) are compositionally biased toward basic residues.

Belongs to the TRAFAC class YlqF/YawG GTPase family. LSG1 subfamily.

It localises to the cytoplasm. Its subcellular location is the endoplasmic reticulum. It is found in the nucleus. The protein resides in the cajal body. The enzyme catalyses GTP + H2O = GDP + phosphate + H(+). Its function is as follows. Functions as a GTPase. May act by mediating the release of NMD3 from the 60S ribosomal subunit after export into the cytoplasm during the 60S ribosomal subunit maturation. This is Large subunit GTPase 1 homolog from Bos taurus (Bovine).